Consider the following 697-residue polypeptide: Potassium-transporting ATPase ATP-binding subunit (697 aa).

4 consecutive transmembrane segments (helical) span residues 55-75 (PIMF…FLPS), 79-99 (SIPG…VLFA), 245-265 (LTLI…YLGF), and 271-291 (VLVA…LSAI). Catalysis depends on Asp324, which acts as the 4-aspartylphosphate intermediate. ATP-binding positions include Asp361, Glu365, 393 to 400 (FKAETRMS), and Lys412. 2 residues coordinate Mg(2+): Asp535 and Asp539. 3 consecutive transmembrane segments (helical) span residues 605-625 (FAII…LNIM), 633-653 (AILS…PLAM), and 677-697 (GGVI…GLFI).

Belongs to the cation transport ATPase (P-type) (TC 3.A.3) family. Type IA subfamily. As to quaternary structure, the system is composed of three essential subunits: KdpA, KdpB and KdpC.

It localises to the cell membrane. The catalysed reaction is K(+)(out) + ATP + H2O = K(+)(in) + ADP + phosphate + H(+). Part of the high-affinity ATP-driven potassium transport (or Kdp) system, which catalyzes the hydrolysis of ATP coupled with the electrogenic transport of potassium into the cytoplasm. This subunit is responsible for energy coupling to the transport system and for the release of the potassium ions to the cytoplasm. The sequence is that of Potassium-transporting ATPase ATP-binding subunit from Bacillus anthracis (strain CDC 684 / NRRL 3495).